A 393-amino-acid polypeptide reads, in one-letter code: uncharacterized protein (393 aa).

Residues 2-266 (AMIGLVGKPN…AEKAGIIKRK (265 aa)) enclose the OBG-type G domain. Residues 8 to 15 (GKPNVGKS) and 78 to 82 (DVAGL) each bind GTP. The 77-residue stretch at 314-390 (DMIVVYPVED…KHNDIIKIVS (77 aa)) folds into the TGS domain.

The protein belongs to the TRAFAC class OBG-HflX-like GTPase superfamily. OBG GTPase family.

This is an uncharacterized protein from Methanocaldococcus jannaschii (strain ATCC 43067 / DSM 2661 / JAL-1 / JCM 10045 / NBRC 100440) (Methanococcus jannaschii).